Consider the following 429-residue polypeptide: Phosphomethylpyrimidine synthase (429 aa).

Substrate is bound by residues N66, M95, Y124, H163, 185-187 (SRG), 226-229 (DAMR), and E265. H269 serves as a coordination point for Zn(2+). Y292 lines the substrate pocket. Residue H333 coordinates Zn(2+). C409, C412, and C416 together coordinate [4Fe-4S] cluster.

The protein belongs to the ThiC family. It depends on [4Fe-4S] cluster as a cofactor.

It carries out the reaction 5-amino-1-(5-phospho-beta-D-ribosyl)imidazole + S-adenosyl-L-methionine = 4-amino-2-methyl-5-(phosphooxymethyl)pyrimidine + CO + 5'-deoxyadenosine + formate + L-methionine + 3 H(+). The protein operates within cofactor biosynthesis; thiamine diphosphate biosynthesis. In terms of biological role, catalyzes the synthesis of the hydroxymethylpyrimidine phosphate (HMP-P) moiety of thiamine from aminoimidazole ribotide (AIR) in a radical S-adenosyl-L-methionine (SAM)-dependent reaction. In Methanopyrus kandleri (strain AV19 / DSM 6324 / JCM 9639 / NBRC 100938), this protein is Phosphomethylpyrimidine synthase.